Here is a 147-residue protein sequence, read N- to C-terminus: Globin, polymeric component P3 (147 aa).

The 145-residue stretch at 2–146 folds into the Globin domain; the sequence is HLTADQVAAL…ISDALIAGLE (145 aa). His-96 provides a ligand contact to heme b.

Belongs to the globin family. In terms of assembly, polymer.

This Glycera dibranchiata (Bloodworm) protein is Globin, polymeric component P3.